The sequence spans 225 residues: 2-C-methyl-D-erythritol 4-phosphate cytidylyltransferase (225 aa).

This sequence belongs to the IspD/TarI cytidylyltransferase family. IspD subfamily.

It catalyses the reaction 2-C-methyl-D-erythritol 4-phosphate + CTP + H(+) = 4-CDP-2-C-methyl-D-erythritol + diphosphate. It participates in isoprenoid biosynthesis; isopentenyl diphosphate biosynthesis via DXP pathway; isopentenyl diphosphate from 1-deoxy-D-xylulose 5-phosphate: step 2/6. Its function is as follows. Catalyzes the formation of 4-diphosphocytidyl-2-C-methyl-D-erythritol from CTP and 2-C-methyl-D-erythritol 4-phosphate (MEP). The chain is 2-C-methyl-D-erythritol 4-phosphate cytidylyltransferase from Haemophilus influenzae (strain PittEE).